The primary structure comprises 503 residues: Aspartyl/glutamyl-tRNA(Asn/Gln) amidotransferase subunit B (503 aa).

It belongs to the GatB/GatE family. GatB subfamily. As to quaternary structure, heterotrimer of A, B and C subunits.

It carries out the reaction L-glutamyl-tRNA(Gln) + L-glutamine + ATP + H2O = L-glutaminyl-tRNA(Gln) + L-glutamate + ADP + phosphate + H(+). The enzyme catalyses L-aspartyl-tRNA(Asn) + L-glutamine + ATP + H2O = L-asparaginyl-tRNA(Asn) + L-glutamate + ADP + phosphate + 2 H(+). Functionally, allows the formation of correctly charged Asn-tRNA(Asn) or Gln-tRNA(Gln) through the transamidation of misacylated Asp-tRNA(Asn) or Glu-tRNA(Gln) in organisms which lack either or both of asparaginyl-tRNA or glutaminyl-tRNA synthetases. The reaction takes place in the presence of glutamine and ATP through an activated phospho-Asp-tRNA(Asn) or phospho-Glu-tRNA(Gln). The chain is Aspartyl/glutamyl-tRNA(Asn/Gln) amidotransferase subunit B from Rhodococcus jostii (strain RHA1).